We begin with the raw amino-acid sequence, 189 residues long: Small ribosomal subunit protein uS5 (189 aa).

Residues 23-86 (FIDKLVHINR…ESAKREMIYV (64 aa)) enclose the S5 DRBM domain.

The protein belongs to the universal ribosomal protein uS5 family. As to quaternary structure, part of the 30S ribosomal subunit. Contacts proteins S4 and S8.

Its function is as follows. With S4 and S12 plays an important role in translational accuracy. Functionally, located at the back of the 30S subunit body where it stabilizes the conformation of the head with respect to the body. This Bartonella bacilliformis (strain ATCC 35685 / KC583 / Herrer 020/F12,63) protein is Small ribosomal subunit protein uS5.